A 204-amino-acid chain; its full sequence is Proteasome subunit beta type-3 (204 aa).

The protein belongs to the peptidase T1B family. In terms of assembly, the 26S proteasome consists of a 20S proteasome core and two 19S regulatory subunits. The 20S proteasome core is composed of 28 subunits that are arranged in four stacked rings, resulting in a barrel-shaped structure. The two end rings are each formed by seven alpha subunits, and the two central rings are each formed by seven beta subunits. The catalytic chamber with the active sites is on the inside of the barrel.

Its subcellular location is the cytoplasm. The protein resides in the nucleus. Non-catalytic component of the proteasome, a multicatalytic proteinase complex which is characterized by its ability to cleave peptides with Arg, Phe, Tyr, Leu, and Glu adjacent to the leaving group at neutral or slightly basic pH. The proteasome has an ATP-dependent proteolytic activity. The sequence is that of Proteasome subunit beta type-3 (pbs-3) from Caenorhabditis elegans.